The primary structure comprises 402 residues: Propionate kinase (402 aa).

The ATP site is built by Asn-11 and Lys-18. Asn-11 lines the Mg(2+) pocket. Residue Arg-86 participates in substrate binding. Asp-143 serves as the catalytic Proton donor/acceptor. Residues His-175, 203–207, 278–280, and 326–330 contribute to the ATP site; these read HLGNG, DLR, and GIGEN.

The protein belongs to the acetokinase family. TdcD subfamily. As to quaternary structure, homodimer. The cofactor is Mg(2+).

The catalysed reaction is propanoate + ATP = propanoyl phosphate + ADP. The protein operates within amino-acid degradation; L-threonine degradation via propanoate pathway; propanoate from L-threonine: step 4/4. Catalyzes the conversion of propionyl phosphate and ADP to propionate and ATP. This is Propionate kinase from Salmonella agona (strain SL483).